The sequence spans 160 residues: Cytochrome b6-f complex subunit 4 (160 aa).

The next 3 membrane-spanning stretches (helical) occupy residues 36–56 (LLYMFPVCILGTIACNVGLAV), 95–115 (LLGVLLMASVPVGLITVPFIE), and 131–151 (TIFLIGTVVAVWLGIGATLPI).

The protein belongs to the cytochrome b family. PetD subfamily. In terms of assembly, the 4 large subunits of the cytochrome b6-f complex are cytochrome b6, subunit IV (17 kDa polypeptide, petD), cytochrome f and the Rieske protein, while the 4 small subunits are petG, petL, petM and petN. The complex functions as a dimer.

Its subcellular location is the plastid. It is found in the chloroplast thylakoid membrane. Functionally, component of the cytochrome b6-f complex, which mediates electron transfer between photosystem II (PSII) and photosystem I (PSI), cyclic electron flow around PSI, and state transitions. The sequence is that of Cytochrome b6-f complex subunit 4 from Staurastrum punctulatum (Green alga).